The sequence spans 142 residues: Large ribosomal subunit protein uL11 (142 aa).

It belongs to the universal ribosomal protein uL11 family. As to quaternary structure, part of the ribosomal stalk of the 50S ribosomal subunit. Interacts with L10 and the large rRNA to form the base of the stalk. L10 forms an elongated spine to which L12 dimers bind in a sequential fashion forming a multimeric L10(L12)X complex. In terms of processing, one or more lysine residues are methylated.

In terms of biological role, forms part of the ribosomal stalk which helps the ribosome interact with GTP-bound translation factors. The protein is Large ribosomal subunit protein uL11 of Xanthomonas campestris pv. campestris (strain B100).